A 972-amino-acid chain; its full sequence is 116 kDa U5 small nuclear ribonucleoprotein component (972 aa).

Met1 carries the N-acetylmethionine modification. A disordered region spans residues 1–53; it reads MDTDLYDEFGNYIGPELDSDEDDDELGRETKDLDEVDEDEDDDDVGDHDEDHP. Composition is skewed to acidic residues over residues 17 to 26 and 34 to 48; these read LDSDEDDDEL and DEVDEDEDDDDVGDH. Ser19 is modified (phosphoserine). A Glycyl lysine isopeptide (Lys-Gly) (interchain with G-Cter in SUMO1); alternate cross-link involves residue Lys64. Lys64 is covalently cross-linked (Glycyl lysine isopeptide (Lys-Gly) (interchain with G-Cter in SUMO2); alternate). At Thr86 the chain carries Phosphothreonine. A tr-type G domain is found at 127 to 409; the sequence is ELIRNVTLCG…GIHLTKEELK (283 aa). GTP is bound by residues 136 to 143, 204 to 208, and 258 to 261; these read GHLHHGKT, DTPGH, and NKID.

Belongs to the TRAFAC class translation factor GTPase superfamily. Classic translation factor GTPase family. EF-G/EF-2 subfamily. In terms of assembly, component of the U5 snRNP and the U4/U6-U5 tri-snRNP complex, a building block of the spliceosome. The U4/U6-U5 tri-snRNP complex is composed of the U4, U6 and U5 snRNAs and at least PRPF3, PRPF4, PRPF6, PRPF8, PRPF31, SNRNP200, TXNL4A, SNRNP40, DDX23, CD2BP2, PPIH, SNU13, EFTUD2, SART1 and USP39. Component of the pre-catalytic, catalytic and post-catalytic spliceosome complexes. Component of the minor spliceosome, which splices U12-type introns. Within this complex, interacts with CRIPT. Interacts with ERBB4 and PRPF8. Interacts with PIH1D1. Interacts with RPAP3 and URI1 in a ZNHIT2-dependent manner. Interacts with NRDE2. Interacts with FAM50A. Interacts with UBL5.

It is found in the nucleus. In terms of biological role, required for pre-mRNA splicing as component of the spliceosome, including pre-catalytic, catalytic and post-catalytic spliceosomal complexes. Component of the U5 snRNP and the U4/U6-U5 tri-snRNP complex, a building block of the spliceosome. As a component of the minor spliceosome, involved in the splicing of U12-type introns in pre-mRNAs. This Bos taurus (Bovine) protein is 116 kDa U5 small nuclear ribonucleoprotein component (EFTUD2).